The chain runs to 290 residues: Glycine--tRNA ligase alpha subunit (290 aa).

Belongs to the class-II aminoacyl-tRNA synthetase family. Tetramer of two alpha and two beta subunits.

It is found in the cytoplasm. It carries out the reaction tRNA(Gly) + glycine + ATP = glycyl-tRNA(Gly) + AMP + diphosphate. In Brachyspira hyodysenteriae (strain ATCC 49526 / WA1), this protein is Glycine--tRNA ligase alpha subunit.